The following is a 207-amino-acid chain: Large ribosomal subunit protein uL4 (207 aa).

Residues 50–76 (AVKNRSAVSGGGRKPWKQKGTGRARQG) form a disordered region.

This sequence belongs to the universal ribosomal protein uL4 family. Part of the 50S ribosomal subunit.

In terms of biological role, one of the primary rRNA binding proteins, this protein initially binds near the 5'-end of the 23S rRNA. It is important during the early stages of 50S assembly. It makes multiple contacts with different domains of the 23S rRNA in the assembled 50S subunit and ribosome. Its function is as follows. Forms part of the polypeptide exit tunnel. The protein is Large ribosomal subunit protein uL4 of Staphylococcus aureus (strain JH9).